A 710-amino-acid polypeptide reads, in one-letter code: Solute carrier organic anion transporter family member 3A1 (710 aa).

Position 1 is an N-acetylmethionine (Met1). Positions 1–15 (MQGKKPGGSSGGGRS) are enriched in gly residues. The interval 1–25 (MQGKKPGGSSGGGRSGELQGDEAQR) is disordered. Over 1-40 (MQGKKPGGSSGGGRSGELQGDEAQRNKKKKKKVSCFSNIK) the chain is Cytoplasmic. Residues 41–60 (IFLVSECALMLAQGTVGAYL) form a helical membrane-spanning segment. At 61 to 79 (VSVLTTLERRFNLQSADVG) the chain is on the extracellular side. Residues 80 to 100 (VIASSFEIGNLALILFVSYFG) traverse the membrane as a helical segment. The Cytoplasmic segment spans residues 101–106 (ARGHRP). Residues 107 to 131 (RLIGCGGIVMALGALLSALPEFLTH) form a helical membrane-spanning segment. At 132 to 174 (QYKYEAGEIRWGAEGRDVCAANGSGGDEGPDPDLICRNRTATN) the chain is on the extracellular side. N-linked (GlcNAc...) asparagine glycans are attached at residues Asn153 and Asn169. A helical transmembrane segment spans residues 175–203 (MMYLLLIGAQVLLGIGATPVQPLGVSYID). Topologically, residues 204–222 (DHVRRKDSSLYIGILFTML) are cytoplasmic. The helical transmembrane segment at 223 to 243 (VFGPACGFILGSFCTKIYVDA) threads the bilayer. The Extracellular portion of the chain corresponds to 244–261 (VFIDTSNLDITPDDPRWI). Residues 262-286 (GAWWGGFLLCGALLFFSSLLMFGFP) traverse the membrane as a helical segment. The Cytoplasmic segment spans residues 287–344 (QSLPPHSEPAMESEQAMLSEREYERPKPSNGVLRHPLEPDSSASCFQQLRVIPKVTKH). Residues 345 to 366 (LLSNPVFTCIILAACMEIAVVA) form a helical membrane-spanning segment. Residues 367–386 (GFAAFLGKYLEQQFNLTTSS) lie on the Extracellular side of the membrane. A glycan (N-linked (GlcNAc...) asparagine) is linked at Asn381. A helical membrane pass occupies residues 387-410 (ANQLLGMTAIPCACLGIFLGGLLV). Over 411–414 (KKLS) the chain is Cytoplasmic. A helical transmembrane segment spans residues 415–438 (LSALGAIRMAMLVNLVSTACYVSF). The Extracellular portion of the chain corresponds to 439 to 539 (LFLGCDTGPV…PGCQEAFLTF (101 aa)). N-linked (GlcNAc...) asparagine glycosylation is present at Asn457. The Kazal-like domain occupies 465 to 513 (LDPYSPCNNNCECQTDSFTPVCGADGITYLSACFAGCNSTNLTGCACLT). Disulfide bonds link Cys471–Cys501, Cys477–Cys497, and Cys486–Cys511. 3 N-linked (GlcNAc...) asparagine glycosylation sites follow: Asn502, Asn505, and Asn519. Residues 540–562 (LCVMCICSLIGAMAQTPSVIILI) form a helical membrane-spanning segment. Residues 563 to 571 (RTVSPELKS) lie on the Cytoplasmic side of the membrane. Residues 572 to 597 (YALGVLFLLLRLLGFIPPPLIFGAGI) form a helical membrane-spanning segment. At 598–630 (DSTCLFWSTFCGEQGACVLYDNVVYRYLYVSIA) the chain is on the extracellular side. The helical transmembrane segment at 631-648 (IALKSFAFILYTTTWQCL) threads the bilayer. Over 649–705 (RKNYKRYIKNHEGGLSTSEFFASTLTLDNLGRDPVPANQTHRTKFIYNLEDHEWCEN) the chain is Cytoplasmic.

Belongs to the organo anion transporter (TC 2.A.60) family. In terms of tissue distribution, generally the expression of isoform 1 is higher than that of isoform 2. Expressed in placental trophoblasts. Expressed in pancreas, kidney, liver, lung, brain, heart, cerebellum, peripheral blood leukocyte, colon, small intestine, ovary, testis, prostate, thyroid, thymus and spleen. Expressed in fetal brain, heart, kidney, liver, lung, skeletal muscle, spleen and pancreas. In testis, detected in spermatogonia at different stages and absent from Sertoli cells. Expressed in the choroid plexus epithelium, at the basolateral membrane. In brain, also very abundant in the gray matter of the frontal cortex, but not associated with neuronal cell bodies. Not detected in the white matter. As to expression, expressed in heart, brain, cerebellum, testis, lung, thyroid, spoleen and liver. In testis, primarily localized to the basal membrane of Sertoli cells and weakly expressed within the tubules. In testis, also present in spermatogonia at different stages. In brain, expressed in the choroid plexus epithelium, at the apical membrane as well as in the subapical intracellular vesicular compartments. In brain, also associated with neuronal bodies and axons in both the gray and the white matters of the frontal cortex.

The protein localises to the basolateral cell membrane. It localises to the apical cell membrane. The protein resides in the basal cell membrane. The catalysed reaction is L-thyroxine(out) = L-thyroxine(in). It catalyses the reaction prostaglandin E1(out) = prostaglandin E1(in). It carries out the reaction prostaglandin E2(out) = prostaglandin E2(in). The enzyme catalyses prostaglandin F2alpha(out) = prostaglandin F2alpha(in). The catalysed reaction is (5Z,8Z,11Z,14Z)-eicosatetraenoate(out) = (5Z,8Z,11Z,14Z)-eicosatetraenoate(in). It catalyses the reaction taurocholate(out) = taurocholate(in). It carries out the reaction glycocholate(out) = glycocholate(in). The enzyme catalyses estrone 3-sulfate(out) = estrone 3-sulfate(in). The catalysed reaction is argipressin(out) = argipressin(in). With respect to regulation, stimulated by extracellular acidic pH. Functionally, putative organic anion antiporter with apparent broad substrate specificity. Recognizes various substrates including thyroid hormone L-thyroxine, prostanoids such as prostaglandin E1 and E2, bile acids such as taurocholate, glycolate and glycochenodeoxycholate and peptide hormones such as L-arginine vasopressin, likely operating in a tissue-specific manner. The transport mechanism, its electrogenicity and potential tissue-specific counterions remain to be elucidated. The sequence is that of Solute carrier organic anion transporter family member 3A1 (SLCO3A1) from Homo sapiens (Human).